The following is a 163-amino-acid chain: MALNLQDKQAIVAEVNEAAKGALSAVIADSRGVTVDKMTELRKAAREAGVSMRVVRNTLLRRAVEGTAFECLTDTFVGPTLIAFSNEHPGAAARLFKDFAKANDKFEIKGAAFEGKIQNVEFLATLPTYEEAIARLMGTMKEAAAGKLARTLAAYRDKLQEAA.

This sequence belongs to the universal ribosomal protein uL10 family. In terms of assembly, part of the ribosomal stalk of the 50S ribosomal subunit. The N-terminus interacts with L11 and the large rRNA to form the base of the stalk. The C-terminus forms an elongated spine to which L12 dimers bind in a sequential fashion forming a multimeric L10(L12)X complex.

Its function is as follows. Forms part of the ribosomal stalk, playing a central role in the interaction of the ribosome with GTP-bound translation factors. The chain is Large ribosomal subunit protein uL10 from Histophilus somni (strain 129Pt) (Haemophilus somnus).